We begin with the raw amino-acid sequence, 400 residues long: Phosphoglycerate kinase (400 aa).

Substrate-binding positions include 23–25 (DLN), arginine 38, 61–64 (HFGR), arginine 120, and arginine 153. Residues lysine 203, glutamate 325, and 355-358 (GGDT) each bind ATP.

This sequence belongs to the phosphoglycerate kinase family. As to quaternary structure, monomer.

The protein resides in the cytoplasm. The enzyme catalyses (2R)-3-phosphoglycerate + ATP = (2R)-3-phospho-glyceroyl phosphate + ADP. The protein operates within carbohydrate degradation; glycolysis; pyruvate from D-glyceraldehyde 3-phosphate: step 2/5. The sequence is that of Phosphoglycerate kinase from Agrobacterium fabrum (strain C58 / ATCC 33970) (Agrobacterium tumefaciens (strain C58)).